The primary structure comprises 143 residues: Large ribosomal subunit protein uL11 (143 aa).

This sequence belongs to the universal ribosomal protein uL11 family. As to quaternary structure, part of the ribosomal stalk of the 50S ribosomal subunit. Interacts with L10 and the large rRNA to form the base of the stalk. L10 forms an elongated spine to which L12 dimers bind in a sequential fashion forming a multimeric L10(L12)X complex. In terms of processing, one or more lysine residues are methylated.

Forms part of the ribosomal stalk which helps the ribosome interact with GTP-bound translation factors. This Ectopseudomonas mendocina (strain ymp) (Pseudomonas mendocina) protein is Large ribosomal subunit protein uL11.